The primary structure comprises 316 residues: Acetyl-coenzyme A carboxylase carboxyl transferase subunit alpha (316 aa).

A CoA carboxyltransferase C-terminal domain is found at 36–290 (KLEQKLDSLK…KQFLVEQLHI (255 aa)).

It belongs to the AccA family. In terms of assembly, acetyl-CoA carboxylase is a heterohexamer composed of biotin carboxyl carrier protein (AccB), biotin carboxylase (AccC) and two subunits each of ACCase subunit alpha (AccA) and ACCase subunit beta (AccD).

The protein resides in the cytoplasm. The enzyme catalyses N(6)-carboxybiotinyl-L-lysyl-[protein] + acetyl-CoA = N(6)-biotinyl-L-lysyl-[protein] + malonyl-CoA. Its pathway is lipid metabolism; malonyl-CoA biosynthesis; malonyl-CoA from acetyl-CoA: step 1/1. In terms of biological role, component of the acetyl coenzyme A carboxylase (ACC) complex. First, biotin carboxylase catalyzes the carboxylation of biotin on its carrier protein (BCCP) and then the CO(2) group is transferred by the carboxyltransferase to acetyl-CoA to form malonyl-CoA. The sequence is that of Acetyl-coenzyme A carboxylase carboxyl transferase subunit alpha from Protochlamydia amoebophila (strain UWE25).